Reading from the N-terminus, the 440-residue chain is Xaa-Pro dipeptidase (440 aa).

Residues aspartate 244, aspartate 255, histidine 336, glutamate 381, and glutamate 420 each coordinate Mn(2+).

Belongs to the peptidase M24B family. Mn(2+) serves as cofactor. In terms of processing, the N-terminus is blocked.

The enzyme catalyses Xaa-L-Pro dipeptide + H2O = an L-alpha-amino acid + L-proline. The catalysed reaction is diisopropyl fluorophosphate + H2O = diisopropyl phosphate + fluoride + 2 H(+). Its function is as follows. Splits dipeptides with a prolyl or hydroxyprolyl residue in the C-terminal position and a nonpolar amino acid at the N-terminal position. Also catalyzes the hydrolysis of toxic organophosphorus cholinesterase-inhibiting compounds including nerve gases such as diisopropylfluorophosphate (DFP), O-isopropyl methylphosphonofluoridate (sarin), O-pinacolyl methylphosphonofluoridate (soman), and O-cyclohexyl methylphosphonofluoridate. This is Xaa-Pro dipeptidase (pepQ) from Pseudoalteromonas haloplanktis (Alteromonas haloplanktis).